The sequence spans 443 residues: Nuclear pore complex-interacting protein family member B15 (443 aa).

The signal sequence occupies residues 1-18 (MRLRFWLLIWLLLGFISH). N-linked (GlcNAc...) asparagine glycosylation is present at Asn-111. Disordered regions lie at residues 242-262 (RMGR…NSLS) and 330-413 (SPLP…TRHC). The segment covering 252–262 (QQHSITDNSLS) has biased composition (polar residues). Residues 351–393 (EAEKPPKPKRWRVDEVEQSPKPKRRRADEVEQSPKPKRQREAE) show a composition bias toward basic and acidic residues. A compositionally biased stretch (basic residues) spans 399-412 (KPKRRRLSKLRTRH).

It belongs to the NPIP family.

The protein localises to the secreted. The sequence is that of Nuclear pore complex-interacting protein family member B15 (NPIPB15) from Homo sapiens (Human).